Consider the following 354-residue polypeptide: MSYVLNLDRIALYIHYERELSEDEKTSIKQYLKKMVEENKTFDELKGEKKDFKEENLDIFNKSVEYLKKNGVPNPLLDTEYIFSDVLKVNKNTLKYSMSREIKEEDKNKIREMLVLRAKKRKPLQYILGEWEFYGLPFKMSEGVLIPRADTEILVEQCIQLMREVEEPNILDIGSGSGAISIAVANELKSSSVTGIDINEKAIKLAIENKILNKIENVNFIESNLFGKLDKDFKYDLIVSNPPYISKDEYETLMPEVKNYEPQNALTDLGDGLHFYKEISKLAGEYLKDTGYLAFEIGYNQAKDVSKILQDNNFAILSIVKDYGGNDRVIIAKKAIKAENFEEIEEEEDVNLSE.

S-adenosyl-L-methionine contacts are provided by residues 174–178 (GSGSG), Asp197, and Asn241. 241–244 (NPPY) serves as a coordination point for substrate.

It belongs to the protein N5-glutamine methyltransferase family. PrmC subfamily.

It catalyses the reaction L-glutaminyl-[peptide chain release factor] + S-adenosyl-L-methionine = N(5)-methyl-L-glutaminyl-[peptide chain release factor] + S-adenosyl-L-homocysteine + H(+). Its function is as follows. Methylates the class 1 translation termination release factors RF1/PrfA and RF2/PrfB on the glutamine residue of the universally conserved GGQ motif. The protein is Release factor glutamine methyltransferase of Fusobacterium nucleatum subsp. nucleatum (strain ATCC 25586 / DSM 15643 / BCRC 10681 / CIP 101130 / JCM 8532 / KCTC 2640 / LMG 13131 / VPI 4355).